We begin with the raw amino-acid sequence, 80 residues long: RNA-binding protein Hfq (80 aa).

The Sm domain occupies 9 to 69 (DVFLNQVRKE…ISTILPITPI (61 aa)).

It belongs to the Hfq family. In terms of assembly, homohexamer.

Functionally, RNA chaperone that binds small regulatory RNA (sRNAs) and mRNAs to facilitate mRNA translational regulation in response to envelope stress, environmental stress and changes in metabolite concentrations. Also binds with high specificity to tRNAs. The protein is RNA-binding protein Hfq of Alkaliphilus metalliredigens (strain QYMF).